Consider the following 392-residue polypeptide: GDP-mannose transporter (392 aa).

Residues Met-1–Ala-40 are disordered. Topologically, residues Met-1 to Gly-55 are cytoplasmic. Positions Arg-29–Gln-38 are enriched in polar residues. The helical transmembrane segment at Ala-56 to Val-76 threads the bilayer. At Ser-77 to Glu-80 the chain is on the lumenal side. The chain crosses the membrane as a helical span at residues Trp-81–Ile-101. Over Cys-102 to Lys-121 the chain is Cytoplasmic. Residues Trp-122–Ser-144 traverse the membrane as a helical segment. The Lumenal portion of the chain corresponds to Val-145–Thr-149. The helical transmembrane segment at Ile-150–Gly-168 threads the bilayer. Residues Gly-169–Met-174 are Cytoplasmic-facing. A helical membrane pass occupies residues Ala-175 to Val-198. Over Glu-199 to Thr-213 the chain is Lumenal. A helical membrane pass occupies residues Leu-214–Gly-234. The Cytoplasmic portion of the chain corresponds to Met-235 to Asp-248. The helical transmembrane segment at Thr-249–Glu-269 threads the bilayer. Over Asp-270–Ser-287 the chain is Lumenal. A helical transmembrane segment spans residues Leu-288–Trp-308. The Cytoplasmic portion of the chain corresponds to Cys-309–Thr-316. The helical transmembrane segment at Thr-317–Phe-337 threads the bilayer. The Lumenal portion of the chain corresponds to Asp-338 to Thr-342. The chain crosses the membrane as a helical span at residues Phe-343–Trp-361. Topologically, residues Ser-362 to Ala-392 are cytoplasmic.

Belongs to the TPT transporter family. SLC35D subfamily. In terms of assembly, homooligomer.

The protein resides in the golgi apparatus membrane. Its subcellular location is the cytoplasmic vesicle membrane. The protein localises to the endoplasmic reticulum membrane. Functionally, involved in the import of GDP-mannose from the cytoplasm into the Golgi lumen. In Neurospora crassa (strain ATCC 24698 / 74-OR23-1A / CBS 708.71 / DSM 1257 / FGSC 987), this protein is GDP-mannose transporter (vrg-4).